Reading from the N-terminus, the 310-residue chain is Nucleotide-binding protein BAD_0837 (310 aa).

31–38 (GMSGAGRS) contacts ATP. 82–85 (DVRS) is a GTP binding site.

This sequence belongs to the RapZ-like family.

Functionally, displays ATPase and GTPase activities. This Bifidobacterium adolescentis (strain ATCC 15703 / DSM 20083 / NCTC 11814 / E194a) protein is Nucleotide-binding protein BAD_0837.